Consider the following 526-residue polypeptide: Peptide chain release factor 3 (526 aa).

In terms of domain architecture, tr-type G spans 9–277; the sequence is DRRRTFAIVS…TFVDHAPAPL (269 aa). GTP contacts are provided by residues 18–25, 86–90, and 140–143; these read SHPDAGKT, DTPGH, and NKLD.

It belongs to the TRAFAC class translation factor GTPase superfamily. Classic translation factor GTPase family. PrfC subfamily.

The protein localises to the cytoplasm. Functionally, increases the formation of ribosomal termination complexes and stimulates activities of RF-1 and RF-2. It binds guanine nucleotides and has strong preference for UGA stop codons. It may interact directly with the ribosome. The stimulation of RF-1 and RF-2 is significantly reduced by GTP and GDP, but not by GMP. The chain is Peptide chain release factor 3 from Geobacter sulfurreducens (strain ATCC 51573 / DSM 12127 / PCA).